We begin with the raw amino-acid sequence, 158 residues long: NADPH-dependent 7-cyano-7-deazaguanine reductase (158 aa).

Cys56 acts as the Thioimide intermediate in catalysis. Residue Asp63 is the Proton donor of the active site. Substrate is bound by residues 78–80 (LES) and 97–98 (HE).

This sequence belongs to the GTP cyclohydrolase I family. QueF type 1 subfamily.

Its subcellular location is the cytoplasm. It carries out the reaction 7-aminomethyl-7-carbaguanine + 2 NADP(+) = 7-cyano-7-deazaguanine + 2 NADPH + 3 H(+). It functions in the pathway tRNA modification; tRNA-queuosine biosynthesis. Its function is as follows. Catalyzes the NADPH-dependent reduction of 7-cyano-7-deazaguanine (preQ0) to 7-aminomethyl-7-deazaguanine (preQ1). The sequence is that of NADPH-dependent 7-cyano-7-deazaguanine reductase from Nitrobacter hamburgensis (strain DSM 10229 / NCIMB 13809 / X14).